The sequence spans 252 residues: AA9 family lytic polysaccharide monooxygenase B (252 aa).

An N-terminal signal peptide occupies residues 1-20; sequence MVSFTKTFFAIVACALGVQA. Cu(2+)-binding residues include His21 and His106. The cysteines at positions 72 and 198 are disulfide-linked. A glycan (N-linked (GlcNAc...) asparagine) is linked at Asn158. Positions 184 and 193 each coordinate O2. Tyr195 contributes to the Cu(2+) binding site. An N-linked (GlcNAc...) asparagine glycan is attached at Asn237.

It belongs to the polysaccharide monooxygenase AA9 family. It depends on Cu(2+) as a cofactor.

The protein resides in the secreted. The catalysed reaction is [(1-&gt;4)-beta-D-glucosyl]n+m + reduced acceptor + O2 = 4-dehydro-beta-D-glucosyl-[(1-&gt;4)-beta-D-glucosyl]n-1 + [(1-&gt;4)-beta-D-glucosyl]m + acceptor + H2O.. In terms of biological role, lytic polysaccharide monooxygenase (LPMO) that depolymerizes crystalline and amorphous polysaccharides via the oxidation of scissile alpha- or beta-(1-4)-glycosidic bonds, yielding C1 or C4 oxidation products. Catalysis by LPMOs requires the reduction of the active-site copper from Cu(II) to Cu(I) by a reducing agent and H(2)O(2) or O(2) as a cosubstrate. The synergistic activity of LPMO9B with xylanase Xyl10G or cellulase Cel5B shows efficient bioconversion rates of 56 and 174 percent in pretreated kenaf (Hibiscus cannabinus) and oak, respectively. This chain is AA9 family lytic polysaccharide monooxygenase B, found in Gloeophyllum trabeum (strain ATCC 11539 / FP-39264 / Madison 617) (Brown rot fungus).